The chain runs to 124 residues: Large ribosomal subunit protein uL18 (124 aa).

Belongs to the universal ribosomal protein uL18 family. In terms of assembly, part of the 50S ribosomal subunit; part of the 5S rRNA/L5/L18/L25 subcomplex. Contacts the 5S and 23S rRNAs.

Functionally, this is one of the proteins that bind and probably mediate the attachment of the 5S RNA into the large ribosomal subunit, where it forms part of the central protuberance. This chain is Large ribosomal subunit protein uL18, found in Parafrankia sp. (strain EAN1pec).